The sequence spans 118 residues: ATP synthase subunit gamma, chloroplastic (118 aa).

A disulfide bond links Cys-30 and Cys-36.

Belongs to the ATPase gamma chain family. In terms of assembly, F-type ATPases have 2 components, CF(1) - the catalytic core - and CF(0) - the membrane proton channel. CF(1) has five subunits: alpha(3), beta(3), gamma(1), delta(1), epsilon(1). CF(0) has four main subunits: a, b, b' and c.

Its subcellular location is the plastid. It localises to the chloroplast thylakoid membrane. Produces ATP from ADP in the presence of a proton gradient across the membrane. The gamma chain is believed to be important in regulating ATPase activity and the flow of protons through the CF(0) complex. Its function is as follows. Inceptin is a proteolytic fragment produced by insect larvae that previously ingested the protein. This peptide mediate plant perception of herbivory through the induction of volatile, phenylpropanoid and protease inhibitor defenses such as ethylene, jasmonic acid and salicylic acid for example. The sequence is that of ATP synthase subunit gamma, chloroplastic from Vigna unguiculata (Cowpea).